The chain runs to 123 residues: Ribosome-binding factor A (123 aa).

This sequence belongs to the RbfA family. In terms of assembly, monomer. Binds 30S ribosomal subunits, but not 50S ribosomal subunits or 70S ribosomes.

The protein localises to the cytoplasm. In terms of biological role, one of several proteins that assist in the late maturation steps of the functional core of the 30S ribosomal subunit. Associates with free 30S ribosomal subunits (but not with 30S subunits that are part of 70S ribosomes or polysomes). Required for efficient processing of 16S rRNA. May interact with the 5'-terminal helix region of 16S rRNA. This is Ribosome-binding factor A from Lactobacillus johnsonii (strain CNCM I-12250 / La1 / NCC 533).